A 126-amino-acid chain; its full sequence is Aspartate 1-decarboxylase (126 aa).

Ser25 (schiff-base intermediate with substrate; via pyruvic acid) is an active-site residue. Pyruvic acid (Ser) is present on Ser25. Thr57 is a substrate binding site. Residue Tyr58 is the Proton donor of the active site. Residue 73 to 75 (GAA) participates in substrate binding.

This sequence belongs to the PanD family. As to quaternary structure, heterooctamer of four alpha and four beta subunits. Requires pyruvate as cofactor. In terms of processing, is synthesized initially as an inactive proenzyme, which is activated by self-cleavage at a specific serine bond to produce a beta-subunit with a hydroxyl group at its C-terminus and an alpha-subunit with a pyruvoyl group at its N-terminus.

It is found in the cytoplasm. The enzyme catalyses L-aspartate + H(+) = beta-alanine + CO2. It participates in cofactor biosynthesis; (R)-pantothenate biosynthesis; beta-alanine from L-aspartate: step 1/1. Its function is as follows. Catalyzes the pyruvoyl-dependent decarboxylation of aspartate to produce beta-alanine. The sequence is that of Aspartate 1-decarboxylase from Edwardsiella ictaluri (strain 93-146).